A 126-amino-acid polypeptide reads, in one-letter code: Flagellar assembly factor FliW (126 aa).

It belongs to the FliW family. Interacts with translational regulator CsrA and flagellin(s).

The protein localises to the cytoplasm. Its function is as follows. Acts as an anti-CsrA protein, binds CsrA and prevents it from repressing translation of its target genes, one of which is flagellin. Binds to flagellin and participates in the assembly of the flagellum. This is Flagellar assembly factor FliW from Sulfurimonas denitrificans (strain ATCC 33889 / DSM 1251) (Thiomicrospira denitrificans (strain ATCC 33889 / DSM 1251)).